The following is a 329-amino-acid chain: Glycerol-3-phosphate dehydrogenase [NAD(P)+] (329 aa).

NADPH is bound by residues Trp11, Arg30, and Lys103. Sn-glycerol 3-phosphate is bound by residues Lys103, Gly132, and Ser134. Ala136 is a binding site for NADPH. Sn-glycerol 3-phosphate is bound by residues Lys187, Asp240, Ser250, Arg251, and Asn252. The Proton acceptor role is filled by Lys187. Arg251 lines the NADPH pocket. Residues Val275 and Glu277 each contribute to the NADPH site.

The protein belongs to the NAD-dependent glycerol-3-phosphate dehydrogenase family.

The protein localises to the cytoplasm. It catalyses the reaction sn-glycerol 3-phosphate + NAD(+) = dihydroxyacetone phosphate + NADH + H(+). The enzyme catalyses sn-glycerol 3-phosphate + NADP(+) = dihydroxyacetone phosphate + NADPH + H(+). The protein operates within membrane lipid metabolism; glycerophospholipid metabolism. In terms of biological role, catalyzes the reduction of the glycolytic intermediate dihydroxyacetone phosphate (DHAP) to sn-glycerol 3-phosphate (G3P), the key precursor for phospholipid synthesis. This is Glycerol-3-phosphate dehydrogenase [NAD(P)+] from Nitrosomonas eutropha (strain DSM 101675 / C91 / Nm57).